A 168-amino-acid polypeptide reads, in one-letter code: Disulfide bond formation protein B (168 aa).

Topologically, residues 1-11 are cytoplasmic; that stretch reads MSNPMRPVRSI. The helical transmembrane segment at 12 to 28 threads the bilayer; that stretch reads LLAIFTGCAGLIGYALY. Over 29-46 the chain is Periplasmic; it reads LQLVENLLPCPLCVVQRM. Cys-38 and Cys-41 are disulfide-bonded. A helical transmembrane segment spans residues 47–63; sequence AYWLIGLTALAGFFHTP. The Cytoplasmic portion of the chain corresponds to 64–69; that stretch reads ETTGRR. The chain crosses the membrane as a helical span at residues 70–87; it reads IYAGLMAVFAFTGGLVAL. Residues 88-143 are Periplasmic-facing; it reads RQAWLVRYPEAFECGISPEEAFLNALPLARWWPVMFEANGDCADVTWKFASLTLPD. A disulfide bond links Cys-101 and Cys-129. A helical transmembrane segment spans residues 144–162; it reads WSAIFFMILAALSIYVLLV. Residues 163 to 168 lie on the Cytoplasmic side of the membrane; sequence RENQRE.

Belongs to the DsbB family.

It localises to the cell inner membrane. In terms of biological role, required for disulfide bond formation in some periplasmic proteins. Acts by oxidizing the DsbA protein. The chain is Disulfide bond formation protein B from Nitrosospira multiformis (strain ATCC 25196 / NCIMB 11849 / C 71).